The following is a 445-amino-acid chain: Gasdermin-A (445 aa).

A triggers pyroptosis region spans residues 1 to 251 (MTMFENVTRA…VILIQASDVG (251 aa)). 9-13 (RALAR) is an a cardiolipin binding site. Beta stranded transmembrane passes span 78 to 95 (NFGF…DVDV), 99 to 120 (VKVK…TLSV), 163 to 179 (VTLE…SLPF), and 183 to 197 (LGLQ…AVTI).

Belongs to the gasdermin family. Homooligomer; homooligomeric ring-shaped pore complex containing 18-36 subunits when inserted in the membrane. In terms of processing, cleavage by S.pyogenes SpeB relieves autoinhibition by releasing the N-terminal moiety (Gasdermin-A, N-terminal) that initiates pyroptosis. Post-translationally, palmitoylated. As to expression, expressed predominantly in the gastrointestinal tract and, at a lower level, in the skin. Also detected in mammary gland. In the gastrointestinal tract, mainly expressed in differentiated cells, including the differentiated cell layer of esophagus and mucus-secreting pit cells of the gastric epithelium. Down-regulated in gastric cancer cells.

The protein localises to the cytoplasm. It localises to the perinuclear region. It is found in the cytosol. The protein resides in the cell membrane. Its activity is regulated as follows. The full-length protein before cleavage is inactive: intramolecular interactions between N- and C-terminal domains mediate autoinhibition in the absence of activation signal. The intrinsic pyroptosis-inducing activity is carried by the released N-terminal moiety (Gasdermin-A, N-terminal) following cleavage by S.pyogenes effector protein SpeB. Functionally, this form constitutes the precursor of the pore-forming protein and acts as a sensor of infection: upon infection by S.pyogenes, specifically cleaved by S.pyogenes effector protein SpeB in epithelial cells, releasing the N-terminal moiety (Gasdermin-A, N-terminal) that binds to membranes and forms pores, triggering pyroptosis. Its function is as follows. Pore-forming protein that causes membrane permeabilization and pyroptosis. Released upon cleavage by S.pyogenes effector protein SpeB, and binds to membrane inner leaflet lipids. Homooligomerizes within the membrane and forms pores of 10-15 nanometers (nm) of inner diameter, triggering pyroptosis. Pyroptosis triggers the elimination of the infected skin cell, depriving the pathogen of its protective niche, while inducing an inflammatory response. This ultimately prevents bacterial penetration of the epithelial barrier and a subsequent systemic dissemination of the pathogen. Binds to cardiolipin and other acidic phospholipids, such as phosphatidylserine, which mediate its targeting to the inner leaflet membrane. The sequence is that of Gasdermin-A from Homo sapiens (Human).